Consider the following 276-residue polypeptide: Extracellular metalloprotease VDBG_07883 (276 aa).

An N-terminal signal peptide occupies residues 1–17 (MQSKFLWIAAASAATAA). N-linked (GlcNAc...) asparagine glycans are attached at residues asparagine 70 and asparagine 102. Zn(2+) is bound at residue histidine 191. Residue glutamate 192 is part of the active site. Zn(2+) is bound at residue histidine 195. N-linked (GlcNAc...) asparagine glycosylation occurs at asparagine 222. Cysteine 227 and cysteine 254 form a disulfide bridge.

The protein belongs to the peptidase M43B family.

It is found in the secreted. Secreted metalloproteinase that allows assimilation of proteinaceous substrates. This chain is Extracellular metalloprotease VDBG_07883, found in Verticillium alfalfae (strain VaMs.102 / ATCC MYA-4576 / FGSC 10136) (Verticillium wilt of alfalfa).